The chain runs to 528 residues: Endoglucanase 24 (528 aa).

The N-terminal stretch at methionine 1–alanine 24 is a signal peptide. Aspartate 109 acts as the Nucleophile in catalysis. N-linked (GlcNAc...) asparagine glycosylation occurs at asparagine 259. Histidine 446 is a catalytic residue. Asparagine 487 is a glycosylation site (N-linked (GlcNAc...) asparagine). Residues aspartate 492 and glutamate 501 contribute to the active site.

This sequence belongs to the glycosyl hydrolase 9 (cellulase E) family.

It is found in the secreted. It carries out the reaction Endohydrolysis of (1-&gt;4)-beta-D-glucosidic linkages in cellulose, lichenin and cereal beta-D-glucans.. The sequence is that of Endoglucanase 24 from Oryza sativa subsp. japonica (Rice).